The following is a 183-amino-acid chain: Oleosin-B2 (183 aa).

The interval 1 to 23 (QASIFSRFFRMFSFIFPFVNVIK) is polar. Transmembrane regions (helical) follow at residues 24-44 (LIIASVTSLVCLAFSCVALGG), 46-66 (AVALIVSTPLFIMFSPILVPA), and 72-92 (LLASGLMAGTTLGLTGIGLIM). The segment at 24–95 (LIIASVTSLV…TGIGLIMGLV (72 aa)) is hydrophobic.

It belongs to the oleosin family. As to expression, the full-length protein is found in the tapetal lipid bodies of immature anthers, the proteolytically cleaved C-terminal product is found on the coats of pollen grains. Not present in seeds.

Its subcellular location is the lipid droplet. It localises to the membrane. In terms of biological role, many of the major pollen coat proteins are derived from endoproteolytic cleavage of oleosin-like proteins. The protein is Oleosin-B2 (OlnB2) of Brassica napus (Rape).